A 742-amino-acid polypeptide reads, in one-letter code: Phosphoribosylformylglycinamidine synthase subunit PurL (742 aa).

The active site involves His-53. ATP is bound by residues Tyr-56 and Lys-95. A Mg(2+)-binding site is contributed by Glu-97. Substrate contacts are provided by residues 98 to 101 (SHNH) and Arg-120. His-99 (proton acceptor) is an active-site residue. Asp-121 contributes to the Mg(2+) binding site. Gln-245 serves as a coordination point for substrate. Asp-275 is a binding site for Mg(2+). 319–321 (ESQ) contributes to the substrate binding site. Residues Asp-502 and Gly-539 each contribute to the ATP site. Position 540 (Asn-540) interacts with Mg(2+). Residue Ser-542 coordinates substrate.

It belongs to the FGAMS family. In terms of assembly, monomer. Part of the FGAM synthase complex composed of 1 PurL, 1 PurQ and 2 PurS subunits.

It is found in the cytoplasm. It catalyses the reaction N(2)-formyl-N(1)-(5-phospho-beta-D-ribosyl)glycinamide + L-glutamine + ATP + H2O = 2-formamido-N(1)-(5-O-phospho-beta-D-ribosyl)acetamidine + L-glutamate + ADP + phosphate + H(+). It functions in the pathway purine metabolism; IMP biosynthesis via de novo pathway; 5-amino-1-(5-phospho-D-ribosyl)imidazole from N(2)-formyl-N(1)-(5-phospho-D-ribosyl)glycinamide: step 1/2. Part of the phosphoribosylformylglycinamidine synthase complex involved in the purines biosynthetic pathway. Catalyzes the ATP-dependent conversion of formylglycinamide ribonucleotide (FGAR) and glutamine to yield formylglycinamidine ribonucleotide (FGAM) and glutamate. The FGAM synthase complex is composed of three subunits. PurQ produces an ammonia molecule by converting glutamine to glutamate. PurL transfers the ammonia molecule to FGAR to form FGAM in an ATP-dependent manner. PurS interacts with PurQ and PurL and is thought to assist in the transfer of the ammonia molecule from PurQ to PurL. This Lactobacillus acidophilus (strain ATCC 700396 / NCK56 / N2 / NCFM) protein is Phosphoribosylformylglycinamidine synthase subunit PurL.